The following is a 190-amino-acid chain: Holliday junction branch migration complex subunit RuvA (190 aa).

Positions 1 to 63 (MIRKINATIE…EWNTSLYIFK (63 aa)) are domain I. The tract at residues 64 to 138 (DKIERDVFES…NSFSAYSTGA (75 aa)) is domain II. The flexible linker stretch occupies residues 138–142 (ADTQS). Positions 143–190 (YGNNNLKEAIEALETLGFQRYEIMKVIGQLDLEDLKTEEIIKECLTRL) are domain III.

It belongs to the RuvA family. As to quaternary structure, homotetramer. Forms an RuvA(8)-RuvB(12)-Holliday junction (HJ) complex. HJ DNA is sandwiched between 2 RuvA tetramers; dsDNA enters through RuvA and exits via RuvB. An RuvB hexamer assembles on each DNA strand where it exits the tetramer. Each RuvB hexamer is contacted by two RuvA subunits (via domain III) on 2 adjacent RuvB subunits; this complex drives branch migration. In the full resolvosome a probable DNA-RuvA(4)-RuvB(12)-RuvC(2) complex forms which resolves the HJ.

The protein resides in the cytoplasm. Its function is as follows. The RuvA-RuvB-RuvC complex processes Holliday junction (HJ) DNA during genetic recombination and DNA repair, while the RuvA-RuvB complex plays an important role in the rescue of blocked DNA replication forks via replication fork reversal (RFR). RuvA specifically binds to HJ cruciform DNA, conferring on it an open structure. The RuvB hexamer acts as an ATP-dependent pump, pulling dsDNA into and through the RuvAB complex. HJ branch migration allows RuvC to scan DNA until it finds its consensus sequence, where it cleaves and resolves the cruciform DNA. The polypeptide is Holliday junction branch migration complex subunit RuvA (Petrotoga mobilis (strain DSM 10674 / SJ95)).